A 403-amino-acid polypeptide reads, in one-letter code: Phosphopentomutase (403 aa).

Mn(2+)-binding residues include aspartate 13, aspartate 298, histidine 303, aspartate 339, histidine 340, and histidine 351.

The protein belongs to the phosphopentomutase family. Requires Mn(2+) as cofactor.

It localises to the cytoplasm. It carries out the reaction 2-deoxy-alpha-D-ribose 1-phosphate = 2-deoxy-D-ribose 5-phosphate. The catalysed reaction is alpha-D-ribose 1-phosphate = D-ribose 5-phosphate. It functions in the pathway carbohydrate degradation; 2-deoxy-D-ribose 1-phosphate degradation; D-glyceraldehyde 3-phosphate and acetaldehyde from 2-deoxy-alpha-D-ribose 1-phosphate: step 1/2. Functionally, isomerase that catalyzes the conversion of deoxy-ribose 1-phosphate (dRib-1-P) and ribose 1-phosphate (Rib-1-P) to deoxy-ribose 5-phosphate (dRib-5-P) and ribose 5-phosphate (Rib-5-P), respectively. In Streptococcus equi subsp. zooepidemicus (strain MGCS10565), this protein is Phosphopentomutase.